The following is a 158-amino-acid chain: UPF0178 protein Rpal_2485 (158 aa).

This sequence belongs to the UPF0178 family.

The sequence is that of UPF0178 protein Rpal_2485 from Rhodopseudomonas palustris (strain TIE-1).